A 483-amino-acid chain; its full sequence is NADH-quinone oxidoreductase subunit N (483 aa).

14 helical membrane passes run 8 to 28, 45 to 65, 78 to 98, 106 to 126, 131 to 151, 166 to 186, 206 to 226, 241 to 261, 275 to 295, 303 to 323, 330 to 350, 373 to 393, 399 to 419, and 452 to 472; these read INLA…GLLL, IAAG…GATQ, FAAF…VVSW, LGNG…MFMI, FLVL…LAAY, FVLG…IYGV, MLGI…KIAA, PTSV…AALF, WGPI…LAGL, LLAY…AVGN, VLVY…LILV, LALL…LAGF, IFMA…VLFS, and AIVG…GSLM.

This sequence belongs to the complex I subunit 2 family. NDH-1 is composed of 14 different subunits. Subunits NuoA, H, J, K, L, M, N constitute the membrane sector of the complex.

The protein localises to the cell inner membrane. It carries out the reaction a quinone + NADH + 5 H(+)(in) = a quinol + NAD(+) + 4 H(+)(out). In terms of biological role, NDH-1 shuttles electrons from NADH, via FMN and iron-sulfur (Fe-S) centers, to quinones in the respiratory chain. The immediate electron acceptor for the enzyme in this species is believed to be ubiquinone. Couples the redox reaction to proton translocation (for every two electrons transferred, four hydrogen ions are translocated across the cytoplasmic membrane), and thus conserves the redox energy in a proton gradient. The protein is NADH-quinone oxidoreductase subunit N of Magnetococcus marinus (strain ATCC BAA-1437 / JCM 17883 / MC-1).